The following is a 95-amino-acid chain: Co-chaperonin GroES (95 aa).

It belongs to the GroES chaperonin family. As to quaternary structure, heptamer of 7 subunits arranged in a ring. Interacts with the chaperonin GroEL.

The protein localises to the cytoplasm. Its function is as follows. Together with the chaperonin GroEL, plays an essential role in assisting protein folding. The GroEL-GroES system forms a nano-cage that allows encapsulation of the non-native substrate proteins and provides a physical environment optimized to promote and accelerate protein folding. GroES binds to the apical surface of the GroEL ring, thereby capping the opening of the GroEL channel. This is Co-chaperonin GroES from Chlorobium phaeobacteroides (strain DSM 266 / SMG 266 / 2430).